The chain runs to 567 residues: Geranylgeranyl transferase type-2 subunit alpha (567 aa).

PFTA repeat units lie at residues 44–78 (LDES…RLEV), 88–122 (LVKA…RLPE), 124–158 (NWAR…QAAV), 159–193 (PPAE…QLHP), 207–241 (VLLK…RADP), and 363–397 (VLQS…ALDP). Ser-98 carries the phosphoserine modification. 5 LRR repeats span residues 442–463 (DVRV…EQLL), 464–486 (LVTH…AALR), 487–508 (CLEV…TNLP), 509–530 (RLQE…QPLA), and 534–555 (RLVL…SEHL).

It belongs to the protein prenyltransferase subunit alpha family. In terms of assembly, heterotrimer composed of RABGGTA, RABGGTB and CHM; within this trimer, RABGGTA and RABGGTB form the catalytic component B, while CHM (component A) mediates peptide substrate binding. The Rab GGTase dimer (RGGT) interacts with CHM (component A) prior to Rab protein binding; the association is stabilized by geranylgeranyl pyrophosphate (GGpp). The CHM:RGGT:Rab complex is destabilized by GGpp. Interacts with non-phosphorylated form of RAB8A; phosphorylation of RAB8A disrupts this interaction.

It catalyses the reaction geranylgeranyl diphosphate + L-cysteinyl-[protein] = S-geranylgeranyl-L-cysteinyl-[protein] + diphosphate. Its activity is regulated as follows. The enzymatic reaction requires the aid of a Rab escort protein (also called component A), such as CHM. Its function is as follows. Catalyzes the transfer of a geranylgeranyl moiety from geranylgeranyl diphosphate to both cysteines of Rab proteins with the C-terminal sequence -XXCC, -XCXC and -CCXX, such as RAB1A, RAB3A, RAB5A and RAB7A. This Sus scrofa (Pig) protein is Geranylgeranyl transferase type-2 subunit alpha (RABGGTA).